The primary structure comprises 149 residues: MEQSFIMIKPDGVQRGLIGDIISRFEKKGFFLRGMKFMNVERSFAQQHYADLSDKPFFPGLVEYIISGPVVAMVWEGKDVVATGRRIIGATRPWEAAPGTIRADYAVEVGRNVIHGSDSVDNGKKEIALWFPEGLAEWRSNLHPWIYES.

Positions 9, 57, 85, 91, 102, and 112 each coordinate ATP. Catalysis depends on His-115, which acts as the Pros-phosphohistidine intermediate.

As to quaternary structure, homohexamer. Mg(2+) is required as a cofactor.

The catalysed reaction is a 2'-deoxyribonucleoside 5'-diphosphate + ATP = a 2'-deoxyribonucleoside 5'-triphosphate + ADP. It carries out the reaction a ribonucleoside 5'-diphosphate + ATP = a ribonucleoside 5'-triphosphate + ADP. In terms of biological role, major role in the synthesis of nucleoside triphosphates other than ATP. The ATP gamma phosphate is transferred to the NDP beta phosphate via a ping-pong mechanism, using a phosphorylated active-site intermediate. This NDK is microtubule-associated. The polypeptide is Nucleoside diphosphate kinase 1 (NDKR) (Oryza sativa subsp. indica (Rice)).